The sequence spans 51 residues: MDPAPEPVTYVCGDCGQENTLKSGDVIQCRECGYRILYKKRTRRVVQYEAR.

Residues C12, C15, C29, and C32 each contribute to the Zn(2+) site.

It belongs to the archaeal Rpo12/eukaryotic RPC10 RNA polymerase subunit family. Component of the RNA polymerase II, IV and V complexes. Associates with the mediator complex. Interacts with NRPD1.

It localises to the nucleus. DNA-dependent RNA polymerase catalyzes the transcription of DNA into RNA using the four ribonucleoside triphosphates as substrates. Component of RNA polymerase II which synthesizes mRNA precursors and many functional non-coding RNAs. Pol II is the central component of the basal RNA polymerase II transcription machinery. It is composed of mobile elements that move relative to each other. Component of RNA polymerases IV and V which mediate short-interfering RNAs (siRNA) accumulation and subsequent RNA-directed DNA methylation-dependent (RdDM) transcriptional gene silencing (TGS) of endogenous repeated sequences, including transposable elements. The polypeptide is DNA-directed RNA polymerases II, IV and V subunit 12 (NRPB12) (Arabidopsis thaliana (Mouse-ear cress)).